The chain runs to 274 residues: Large ribosomal subunit protein uL2cz/uL2cy (274 aa).

Disordered regions lie at residues 1–20 (MAIH…AVDS) and 223–274 (MNPV…RRSK).

It belongs to the universal ribosomal protein uL2 family. As to quaternary structure, part of the 50S ribosomal subunit.

It localises to the plastid. The protein resides in the chloroplast. The protein is Large ribosomal subunit protein uL2cz/uL2cy (rpl2-A) of Eucalyptus globulus subsp. globulus (Tasmanian blue gum).